We begin with the raw amino-acid sequence, 114 residues long: Nucleoid-associated protein CKL_3826 (114 aa).

Belongs to the YbaB/EbfC family. As to quaternary structure, homodimer.

It is found in the cytoplasm. Its subcellular location is the nucleoid. In terms of biological role, binds to DNA and alters its conformation. May be involved in regulation of gene expression, nucleoid organization and DNA protection. The sequence is that of Nucleoid-associated protein CKL_3826 from Clostridium kluyveri (strain ATCC 8527 / DSM 555 / NBRC 12016 / NCIMB 10680 / K1).